Reading from the N-terminus, the 97-residue chain is Co-chaperonin GroES (97 aa).

The protein belongs to the GroES chaperonin family. Heptamer of 7 subunits arranged in a ring. Interacts with the chaperonin GroEL.

The protein resides in the cytoplasm. Its function is as follows. Together with the chaperonin GroEL, plays an essential role in assisting protein folding. The GroEL-GroES system forms a nano-cage that allows encapsulation of the non-native substrate proteins and provides a physical environment optimized to promote and accelerate protein folding. GroES binds to the apical surface of the GroEL ring, thereby capping the opening of the GroEL channel. The polypeptide is Co-chaperonin GroES (Buchnera aphidicola subsp. Geoica urticularia).